We begin with the raw amino-acid sequence, 611 residues long: Leukotriene A-4 hydrolase (611 aa).

K73 is subject to N6-acetyllysine. A peptide-binding positions include 135–137 (QCQ) and 267–272 (PYGGME). H296 contributes to the Zn(2+) binding site. The Proton acceptor role is filled by E297. Zn(2+) contacts are provided by H300 and E319. K337 carries the N6-acetyllysine modification. Y384 acts as the Proton donor in catalysis. Residue K414 is modified to N6-acetyllysine. The residue at position 416 (S416) is a Phosphoserine. 564 to 566 (RMK) is a binding site for a peptide. N6-acetyllysine is present on K573.

Belongs to the peptidase M1 family. In terms of assembly, monomer. Requires Zn(2+) as cofactor. Post-translationally, phosphorylation at Ser-416 inhibits leukotriene-A4 hydrolase activity.

The protein localises to the cytoplasm. It carries out the reaction leukotriene A4 + H2O = leukotriene B4. The enzyme catalyses (5S,6S)-epoxy-(18R)-hydroxy-(7E,9E,11Z,14Z,16E)-eicosapentaenoate + H2O = resolvin E1. The catalysed reaction is (5S,6S)-epoxy-(18S)-hydroxy-(7E,9E,11Z,14Z,16E)-eicosapentaenoate + H2O = 18S-resolvin E1. It catalyses the reaction Release of the N-terminal residue from a tripeptide.. Its pathway is lipid metabolism; leukotriene B4 biosynthesis. With respect to regulation, inhibited by bestatin. The epoxide hydrolase activity is restrained by suicide inactivation that involves binding of LTA4 to Tyr-379. 4-(4-benzylphenyl)thiazol-2-amine (ARM1) selectively inhibits the epoxide hydrolase activity. Its function is as follows. Bifunctional zinc metalloenzyme that comprises both epoxide hydrolase (EH) and aminopeptidase activities. Acts as an epoxide hydrolase to catalyze the conversion of LTA4 to the pro-inflammatory mediator leukotriene B4 (LTB4). Also has aminopeptidase activity, with high affinity for N-terminal arginines of various synthetic tripeptides. In addition to its pro-inflammatory EH activity, may also counteract inflammation by its aminopeptidase activity, which inactivates by cleavage another neutrophil attractant, the tripeptide Pro-Gly-Pro (PGP), a bioactive fragment of collagen generated by the action of matrix metalloproteinase-9 (MMP9) and prolylendopeptidase (PREPL). Involved also in the biosynthesis of resolvin E1 and 18S-resolvin E1 from eicosapentaenoic acid, two lipid mediators that show potent anti-inflammatory and pro-resolving actions. The protein is Leukotriene A-4 hydrolase (Lta4h) of Mus musculus (Mouse).